A 196-amino-acid polypeptide reads, in one-letter code: MSSKEQKTPEGQAPEEIIMDQHEEIEAVEPEASAEQVDPRDEKIANLEAQLAEAQTRERDGILRVKAEMENLRRRTELDIEKAHKFALEKFINELLPVIDSLDRALEVADKANPDMSAMVEGIELTLKSMLDVVRKFGVEVIAETNVPLDPNVHQAIAMVESDDVAPGNVLGIMQKGYTLNGRTIRAAMVTVAKAK.

The tract at residues 1-39 (MSSKEQKTPEGQAPEEIIMDQHEEIEAVEPEASAEQVDP) is disordered.

This sequence belongs to the GrpE family. As to quaternary structure, homodimer.

It localises to the cytoplasm. Its function is as follows. Participates actively in the response to hyperosmotic and heat shock by preventing the aggregation of stress-denatured proteins, in association with DnaK and GrpE. It is the nucleotide exchange factor for DnaK and may function as a thermosensor. Unfolded proteins bind initially to DnaJ; upon interaction with the DnaJ-bound protein, DnaK hydrolyzes its bound ATP, resulting in the formation of a stable complex. GrpE releases ADP from DnaK; ATP binding to DnaK triggers the release of the substrate protein, thus completing the reaction cycle. Several rounds of ATP-dependent interactions between DnaJ, DnaK and GrpE are required for fully efficient folding. In Escherichia coli O139:H28 (strain E24377A / ETEC), this protein is Protein GrpE.